The chain runs to 80 residues: Lantibiotic Flvalpha.c (80 aa).

A propeptide spans 1-38 (MNKNPIYRSEEEAKNIACGNVAAELDENSQALDAINGA) (cleaved by FlvT). A 2,3-didehydrobutyrine; by FlvM1 mark is found at threonine 43 and threonine 47. The beta-methyllanthionine (Thr-Cys); by FlvM1 cross-link spans 52–55 (TLGC). Positions 58–68 (SYGLGNGGYCC) form a cross-link, lanthionine (Ser-Cys); by FlvM1. Cross-links (beta-methyllanthionine (Thr-Cys); by FlvM1) lie at residues 69-74 (TYTVEC) and 71-78 (TVECSKTC).

Post-translationally, the lanthionine formed by Ser-58 and Cys-68 forms a putative lipid II binding motif. Maturation of FlvA1 peptides involves the enzymatic conversion of Thr, and Ser into dehydrated AA and the formation of thioether bonds with cysteines. Modifications are processed by the flavecin synthetase FlvM1. This is followed by membrane translocation and cleavage of the modified precursor. In terms of processing, contains DL-lanthionine and DL-beta-methyllanthionine, when coepressed in E.coli with the flavecin synthetase FlvM1.

The protein resides in the secreted. Its function is as follows. Lanthionine-containing peptide antibiotic (lantibiotic) only active on Gram-positive bacteria in synergy with Flvbeta peptides, which are encoded by the same operon than Flvalpha.a. Shows antibacterial activity in synergy with Flvbeta.b, Flvbeta.c, Flvbeta.e and Flvbeta.g. Does not show antibacterial activity when tested with Flvbeta.a, Flvbeta.d, Flvbeta.f and Flvbeta.h. The bactericidal activity of lantibiotics is based on depolarization of energized bacterial cytoplasmic membranes, initiated by the formation of aqueous transmembrane pores. In Ruminococcus flavefaciens, this protein is Lantibiotic Flvalpha.c.